Reading from the N-terminus, the 150-residue chain is UPF0735 ACT domain-containing protein Csac_0995 (150 aa).

One can recognise an ACT domain in the interval 72–147 (TLALVLQDVP…GVKKIEILGR (76 aa)).

The protein belongs to the UPF0735 family.

This is UPF0735 ACT domain-containing protein Csac_0995 from Caldicellulosiruptor saccharolyticus (strain ATCC 43494 / DSM 8903 / Tp8T 6331).